The sequence spans 87 residues: Small ribosomal subunit protein eS21 (87 aa).

It belongs to the eukaryotic ribosomal protein eS21 family. Component of the small ribosomal subunit. Mature ribosomes consist of a small (40S) and a large (60S) subunit. The 40S subunit contains about 33 different proteins and 1 molecule of RNA (18S). The 60S subunit contains about 49 different proteins and 3 molecules of RNA (25S, 5.8S and 5S).

The protein localises to the cytoplasm. Its function is as follows. Required for the processing of the 20S rRNA-precursor to mature 18S rRNA in a late step of the maturation of 40S ribosomal subunits. Has a physiological role leading to 18S rRNA stability. This chain is Small ribosomal subunit protein eS21 (RPS21), found in Candida albicans (Yeast).